A 177-amino-acid chain; its full sequence is Peptidoglycan-associated lipoprotein (177 aa).

A signal peptide spans 1 to 32 (MSRTNISALSPMQKLARNPAVIAMTLALALAG). Residue C33 is the site of N-palmitoyl cysteine attachment. Residue C33 is the site of S-diacylglycerol cysteine attachment. The OmpA-like domain occupies 59-176 (QQDFTVNVGD…RAVTVLGGAG (118 aa)).

It belongs to the Pal lipoprotein family. As to quaternary structure, the Tol-Pal system is composed of five core proteins: the inner membrane proteins TolA, TolQ and TolR, the periplasmic protein TolB and the outer membrane protein Pal. They form a network linking the inner and outer membranes and the peptidoglycan layer.

The protein localises to the cell outer membrane. Functionally, part of the Tol-Pal system, which plays a role in outer membrane invagination during cell division and is important for maintaining outer membrane integrity. The sequence is that of Peptidoglycan-associated lipoprotein from Agrobacterium fabrum (strain C58 / ATCC 33970) (Agrobacterium tumefaciens (strain C58)).